A 549-amino-acid chain; its full sequence is Cation/acetate symporter ActP (549 aa).

Helical transmembrane passes span Trp33–Ala53, Leu77–Phe97, Gly103–Glu123, Ile148–Gly168, Ile183–Ala203, Trp206–Val226, Ile262–Leu282, Gly303–Val323, Leu355–Leu375, Val404–Glu424, Ile428–Leu448, Gly464–Val484, and Ile493–Phe513.

This sequence belongs to the sodium:solute symporter (SSF) (TC 2.A.21) family.

Its subcellular location is the cell inner membrane. Transports acetate. This is Cation/acetate symporter ActP from Escherichia coli (strain ATCC 8739 / DSM 1576 / NBRC 3972 / NCIMB 8545 / WDCM 00012 / Crooks).